The primary structure comprises 462 residues: Elongation factor 1-alpha (462 aa).

Gly-2 is modified (n,N,N-trimethylglycine). N6,N6-dimethyllysine; alternate is present on Lys-3. N6-methyllysine; alternate is present on Lys-3. The tr-type G domain maps to 5–242; it reads KAHVNVVVIG…DAIEPPVRPS (238 aa). Positions 14-21 are G1; it reads GHVDSGKS. GTP is bound at residue 14-21; the sequence is GHVDSGKS. Lys-30 is modified (N6-methyllysine). A G2 region spans residues 70 to 74; it reads GITID. Residue Lys-79 is modified to N6,N6,N6-trimethyllysine. The segment at 91 to 94 is G3; sequence DAPG. GTP is bound by residues 91–95 and 153–156; these read DAPGH and NKMD. Residues 153–156 are G4; that stretch reads NKMD. The interval 192–194 is G5; it reads SGW. N6,N6-dimethyllysine; alternate is present on Lys-318. Lys-318 is modified (N6-methyllysine; alternate). Lys-392 carries the post-translational modification N6-methyllysine.

Belongs to the TRAFAC class translation factor GTPase superfamily. Classic translation factor GTPase family. EF-Tu/EF-1A subfamily.

Its subcellular location is the cytoplasm. This protein promotes the GTP-dependent binding of aminoacyl-tRNA to the A-site of ribosomes during protein biosynthesis. In Serendipita indica (Root endophyte fungus), this protein is Elongation factor 1-alpha (TEF1).